A 537-amino-acid chain; its full sequence is Trypsin-resistant surface T6 protein (537 aa).

A signal peptide spans 1 to 22 (MLACLAILAVVGLGMTRVSALS). The segment at 310–330 (GNTYDNLDKKPDKGNGITSKE) is hydrophilic. The short motif at 504–508 (LPSTG) is the LPXTG sorting signal element. Threonine 507 carries the post-translational modification Pentaglycyl murein peptidoglycan amidated threonine. A propeptide spans 508 to 537 (GSIGTYLFKAIGSAAMIGAIGIYIVKRRKA) (removed by sortase).

It localises to the secreted. The protein resides in the cell wall. The sequence is that of Trypsin-resistant surface T6 protein (tee6) from Streptococcus pyogenes serotype M6 (strain ATCC BAA-946 / MGAS10394).